We begin with the raw amino-acid sequence, 259 residues long: 5'-nucleotidase SurE (259 aa).

Positions 8, 9, 40, and 95 each coordinate a divalent metal cation.

This sequence belongs to the SurE nucleotidase family. A divalent metal cation serves as cofactor.

The protein resides in the cytoplasm. The enzyme catalyses a ribonucleoside 5'-phosphate + H2O = a ribonucleoside + phosphate. Its function is as follows. Nucleotidase that shows phosphatase activity on nucleoside 5'-monophosphates. The sequence is that of 5'-nucleotidase SurE from Oleidesulfovibrio alaskensis (strain ATCC BAA-1058 / DSM 17464 / G20) (Desulfovibrio alaskensis).